Reading from the N-terminus, the 516-residue chain is Ammonium transporter Amt1 (516 aa).

The next 11 membrane-spanning stretches (helical) occupy residues Tyr17–Leu37, Ala59–Leu79, Ile101–Val121, Tyr130–Trp150, Leu170–Ala190, Met214–Gly234, Val258–Thr278, Pro286–His306, Val307–Tyr327, Val342–Val362, and Val374–Ala394. The interval Ile426–Gln516 is disordered. A compositionally biased stretch (basic and acidic residues) spans Asn445 to Gly491.

This sequence belongs to the ammonia transporter channel (TC 1.A.11.2) family. In terms of assembly, homotrimer. Interacts with both GlnK1 and GlnK2 after ammonium shock. Interaction is rapid, reversible and dependent on nitrogen source.

Its subcellular location is the cell membrane. Involved in the uptake of ammonium/ammonia (NH(4)(+)/NH(3)). Transport is electrogenic. The polypeptide is Ammonium transporter Amt1 (Haloferax mediterranei (strain ATCC 33500 / DSM 1411 / JCM 8866 / NBRC 14739 / NCIMB 2177 / R-4) (Halobacterium mediterranei)).